Reading from the N-terminus, the 227-residue chain is uncharacterized protein (227 aa).

2 helical membrane passes run 7–24 (FVYA…VTWA) and 135–157 (VVVI…LMCL).

It belongs to the TMEM9 family.

It localises to the membrane. This is an uncharacterized protein from Drosophila melanogaster (Fruit fly).